Consider the following 187-residue polypeptide: Protein GrpE (187 aa).

The disordered stretch occupies residues 1–22 (MADEQNLDAQAQDQAAEAGAGD). Over residues 7–22 (LDAQAQDQAAEAGAGD) the composition is skewed to low complexity.

Belongs to the GrpE family. Homodimer.

It is found in the cytoplasm. Participates actively in the response to hyperosmotic and heat shock by preventing the aggregation of stress-denatured proteins, in association with DnaK and GrpE. It is the nucleotide exchange factor for DnaK and may function as a thermosensor. Unfolded proteins bind initially to DnaJ; upon interaction with the DnaJ-bound protein, DnaK hydrolyzes its bound ATP, resulting in the formation of a stable complex. GrpE releases ADP from DnaK; ATP binding to DnaK triggers the release of the substrate protein, thus completing the reaction cycle. Several rounds of ATP-dependent interactions between DnaJ, DnaK and GrpE are required for fully efficient folding. In Pseudomonas syringae pv. tomato (strain ATCC BAA-871 / DC3000), this protein is Protein GrpE.